Reading from the N-terminus, the 107-residue chain is Urease subunit beta (107 aa).

It belongs to the urease beta subunit family. In terms of assembly, heterotrimer of UreA (gamma), UreB (beta) and UreC (alpha) subunits. Three heterotrimers associate to form the active enzyme.

The protein localises to the cytoplasm. The catalysed reaction is urea + 2 H2O + H(+) = hydrogencarbonate + 2 NH4(+). It functions in the pathway nitrogen metabolism; urea degradation; CO(2) and NH(3) from urea (urease route): step 1/1. The chain is Urease subunit beta from Bacillus sp. (strain TB-90).